A 354-amino-acid polypeptide reads, in one-letter code: G-protein coupled receptor homolog US28 (354 aa).

At 1–37 (MTPTTTTAELTTEFDYDEDATPCVFTDVLNQSKPVTL) the chain is on the extracellular side. Asparagine 30 carries an N-linked (GlcNAc...) asparagine; by host glycan. The chain crosses the membrane as a helical span at residues 38–58 (FLYGVVFLFGSIGNFLVIFTI). The Cytoplasmic portion of the chain corresponds to 59-69 (TWRRRIQCSGD). The helical transmembrane segment at 70-90 (VYFINLAAADLLFVCTLPLWM) threads the bilayer. Over 91–101 (QYLLDHNSLAS) the chain is Extracellular. The helical transmembrane segment at 102-122 (VPCTLLTACFYVAMFASLCFI) threads the bilayer. The Cytoplasmic portion of the chain corresponds to 123–145 (TEIALDRYYAIVYMRYRPVKQAC). A helical transmembrane segment spans residues 146–166 (LFSIFWWIFAVIIAIPHFMVV). The Extracellular segment spans residues 167 to 183 (TKKDNQCMTDYDYLEVS). Residues 184–204 (YPIILNVELMLGAFVIPLSVI) form a helical membrane-spanning segment. Over 205 to 228 (SYCYYRISRIVAVSQSRHKGRIVR) the chain is Cytoplasmic. The helical transmembrane segment at 229–249 (VLIAVVLVFIIFWLPYHLTLF) threads the bilayer. Topologically, residues 250 to 273 (VDTLKLLKWISSSCEFERSLKRAL) are extracellular. Residues 274 to 294 (ILTESLAFCHCCLNPLLYVFV) form a helical membrane-spanning segment. The Cytoplasmic portion of the chain corresponds to 295-354 (GTKFRQELHCLLAEFRQRLFSRDVSWYHSMSFSRRSSPSRRETSSDTLSDEVCRVSQIIP).

The protein belongs to the G-protein coupled receptor 1 family. In terms of assembly, interacts with host GPRASP1; this interaction targets US28 to lysosomes for degradation. Interacts with host CX3CL1/Fractalkine (via N-terminus). Interacts with host Gi alpha-1 subunit GNAI1; this interaction does not lead to the catalytic activation of Gi complex. In terms of processing, phosphorylated. High phosphorylation occurs concomitantly with receptor endocytosis and correlate with low receptor presence at the plasma membrane.

Its subcellular location is the host cell membrane. Binds to a great number of different CC-chemokines including CCL5/RANTES, CCL2/MCP-1, CCL3/MIP-1-alpha as well as CX3CL1/Fractalkine. Transduces signals resulting in the activation of MAP kinase signaling pathways and augmentation of intracellular calcium ion levels, leading to alterations in chemotactic behavior of vascular smooth muscle cells and macrophages. The US28 receptor also exhibits high levels of agonist-independent signaling activity and agonist-independent endocytosis. Interacts with the host Gi complex without activating it, thereby probably interfering with the chemokine-Gi signaling. May also function as a G protein sink to sequester G protein from the cell surface via internalization. Interacts with endogenous Gaq/11 subunits and thereby constitutively activates phospholipase C. The chain is G-protein coupled receptor homolog US28 (US28) from Homo sapiens (Human).